A 65-amino-acid polypeptide reads, in one-letter code: Beta-defensin 106A (65 aa).

Positions 1 to 20 (MRTFLFLFAVLFFLTPAKNA) are cleaved as a signal peptide. Disulfide bonds link Cys-26-Cys-53, Cys-33-Cys-47, and Cys-37-Cys-54.

The protein belongs to the beta-defensin family. Monomer. Interacts with CCR2 (via extracellular N-terminal region); this interaction may preferentially require specific tyrosine sulfation on CCR2.

Its subcellular location is the secreted. It is found in the membrane. In terms of biological role, has antibacterial activity. Acts as a ligand for C-C chemokine receptor CCR2. The polypeptide is Beta-defensin 106A (DEFB106A) (Gorilla gorilla gorilla (Western lowland gorilla)).